The sequence spans 1657 residues: Alsin (1657 aa).

3 RCC1 repeats span residues 59–108, 109–167, and 169–218; these read DGEV…AVTD, NGVA…ALSI, and REIW…ALVQ. Residues 432 to 480 form a disordered region; the sequence is TGAQAGSSAIGPEGLKDSREEQVKQESMQGKKSSSLVDIREEETEGGSR. Positions 445-455 are enriched in basic and acidic residues; that stretch reads GLKDSREEQVK. Over residues 456–467 the composition is skewed to polar residues; it reads QESMQGKKSSSL. Phosphoserine occurs at positions 465, 466, 483, and 492. T510 bears the Phosphothreonine mark. 2 RCC1 repeats span residues 525-576 and 578-627; these read RTEV…ALTA and SQVY…FLVD. K533 bears the N6-acetyllysine mark. Residues 690–885 enclose the DH domain; it reads GYIASLHELA…ECLALHLGRK (196 aa). A PH domain is found at 901–1007; sequence GKMTDSLRKP…RAISQAVDQA (107 aa). MORN repeat units follow at residues 1049 to 1071, 1072 to 1094, 1100 to 1122, 1123 to 1145, 1151 to 1173, 1175 to 1197, 1198 to 1220, and 1221 to 1244; these read YDGR…DGKM, YSGM…NKAM, YVGH…SGEV, FEGC…KLTS, FIGQ…TRGE, YMGM…FGLY, YEGN…DDTI, and YEGE…NGDY. Position 1335 is a phosphoserine (S1335). Residues 1513-1657 form the VPS9 domain; it reads KQPDIALLGF…YYQIQREKLN (145 aa).

Forms a heteromeric complex with ALS2CL. Interacts with ALS2CL.

Its function is as follows. May act as a GTPase regulator. Controls survival and growth of spinal motoneurons. This Homo sapiens (Human) protein is Alsin (ALS2).